Here is a 306-residue protein sequence, read N- to C-terminus: Pantothenate kinase (306 aa).

91-98 (GSVAVGKS) contributes to the ATP binding site.

Belongs to the prokaryotic pantothenate kinase family.

Its subcellular location is the cytoplasm. It carries out the reaction (R)-pantothenate + ATP = (R)-4'-phosphopantothenate + ADP + H(+). The protein operates within cofactor biosynthesis; coenzyme A biosynthesis; CoA from (R)-pantothenate: step 1/5. The protein is Pantothenate kinase of Streptococcus equi subsp. zooepidemicus (strain H70).